The primary structure comprises 116 residues: Ribosome-binding factor A (116 aa).

The protein belongs to the RbfA family. In terms of assembly, monomer. Binds 30S ribosomal subunits, but not 50S ribosomal subunits or 70S ribosomes.

The protein localises to the cytoplasm. Its function is as follows. One of several proteins that assist in the late maturation steps of the functional core of the 30S ribosomal subunit. Associates with free 30S ribosomal subunits (but not with 30S subunits that are part of 70S ribosomes or polysomes). Required for efficient processing of 16S rRNA. May interact with the 5'-terminal helix region of 16S rRNA. The protein is Ribosome-binding factor A of Malacoplasma penetrans (strain HF-2) (Mycoplasma penetrans).